A 174-amino-acid chain; its full sequence is Ubiquinone biosynthesis accessory factor UbiT (174 aa).

Residues 45–133 (LDDGELEFLE…LGLYVKNLMD (89 aa)) enclose the SCP2 domain.

The protein belongs to the UbiT family.

It participates in cofactor biosynthesis; ubiquinone biosynthesis. In terms of biological role, required for O(2)-independent ubiquinone (coenzyme Q) biosynthesis. Likely functions as an accessory factor. This chain is Ubiquinone biosynthesis accessory factor UbiT, found in Escherichia coli O157:H7.